A 626-amino-acid polypeptide reads, in one-letter code: Leucine aminopeptidase 2-1 (626 aa).

Substrate contacts are provided by residues 134 to 136 and 259 to 264; these read QCQ and PYGGME. Residue H288 participates in Zn(2+) binding. Residue E289 is the Proton acceptor of the active site. Zn(2+)-binding residues include H292 and E311. The active-site Proton donor is Y389.

It belongs to the peptidase M1 family. Requires Zn(2+) as cofactor.

The protein resides in the cytoplasm. The protein localises to the nucleus. The enzyme catalyses an epoxide + H2O = an ethanediol. Its function is as follows. Aminopeptidase that preferentially cleaves di- and tripeptides. Also has low epoxide hydrolase activity (in vitro). Can hydrolyze the epoxide leukotriene LTA(4) but it forms preferentially 5,6-dihydroxy-7,9,11,14-eicosatetraenoic acid rather than the cytokine leukotriene B(4) as the product compared to the homologous mammalian enzyme (in vitro). The protein is Leucine aminopeptidase 2-1 (LKA4) of Scheffersomyces stipitis (strain ATCC 58785 / CBS 6054 / NBRC 10063 / NRRL Y-11545) (Yeast).